Here is a 451-residue protein sequence, read N- to C-terminus: Probable glycine dehydrogenase (decarboxylating) subunit 1 (451 aa).

It belongs to the GcvP family. N-terminal subunit subfamily. In terms of assembly, the glycine cleavage system is composed of four proteins: P, T, L and H. In this organism, the P 'protein' is a heterodimer of two subunits.

It catalyses the reaction N(6)-[(R)-lipoyl]-L-lysyl-[glycine-cleavage complex H protein] + glycine + H(+) = N(6)-[(R)-S(8)-aminomethyldihydrolipoyl]-L-lysyl-[glycine-cleavage complex H protein] + CO2. The glycine cleavage system catalyzes the degradation of glycine. The P protein binds the alpha-amino group of glycine through its pyridoxal phosphate cofactor; CO(2) is released and the remaining methylamine moiety is then transferred to the lipoamide cofactor of the H protein. The polypeptide is Probable glycine dehydrogenase (decarboxylating) subunit 1 (Staphylococcus aureus (strain MSSA476)).